We begin with the raw amino-acid sequence, 223 residues long: Deoxyribose-phosphate aldolase (223 aa).

The active-site Proton donor/acceptor is D89. K152 acts as the Schiff-base intermediate with acetaldehyde in catalysis. Residue K181 is the Proton donor/acceptor of the active site.

This sequence belongs to the DeoC/FbaB aldolase family. DeoC type 1 subfamily.

Its subcellular location is the cytoplasm. The enzyme catalyses 2-deoxy-D-ribose 5-phosphate = D-glyceraldehyde 3-phosphate + acetaldehyde. The protein operates within carbohydrate degradation; 2-deoxy-D-ribose 1-phosphate degradation; D-glyceraldehyde 3-phosphate and acetaldehyde from 2-deoxy-alpha-D-ribose 1-phosphate: step 2/2. Its function is as follows. Catalyzes a reversible aldol reaction between acetaldehyde and D-glyceraldehyde 3-phosphate to generate 2-deoxy-D-ribose 5-phosphate. This is Deoxyribose-phosphate aldolase from Listeria monocytogenes serotype 4b (strain F2365).